Here is a 411-residue protein sequence, read N- to C-terminus: Ubiquitin-binding protein CUE5 (411 aa).

A compositionally biased stretch (basic and acidic residues) spans 1 to 12; it reads MEEKEGIKDSSL. Disordered stretches follow at residues 1–102 and 142–411; these read MEEK…NPIL and ESGK…DDEM. Residue K15 forms a Glycyl lysine isopeptide (Lys-Gly) (interchain with G-Cter in ubiquitin) linkage. Phosphoserine is present on residues S21 and S36. Residues 25–58 show a composition bias toward basic and acidic residues; it reads DISKTTDVDLNSDGKKDNDTSAKDGTPKVEEKVN. K59 participates in a covalent cross-link: Glycyl lysine isopeptide (Lys-Gly) (interchain with G-Cter in ubiquitin). T70 carries the post-translational modification Phosphothreonine. K76 participates in a covalent cross-link: Glycyl lysine isopeptide (Lys-Gly) (interchain with G-Cter in ubiquitin). At S91 the chain carries Phosphoserine. A CUE domain is found at 97–140; that stretch reads KENPILQELKDAFPNLEEKYIKAVIIASQGVLSPAFNALLFLSD. Residue K156 forms a Glycyl lysine isopeptide (Lys-Gly) (interchain with G-Cter in ubiquitin) linkage. Phosphothreonine is present on T167. The span at 209–219 shows a compositional bias: basic and acidic residues; the sequence is NPNEREQHHED. At S220 the chain carries Phosphoserine. The segment covering 230 to 242 has biased composition (basic and acidic residues); sequence VEKDLPELTDRAG. Over residues 245 to 256 the composition is skewed to polar residues; sequence LQDTANKVSNWI. S309 and S318 each carry phosphoserine. At T346 the chain carries Phosphothreonine. Position 348 is a phosphoserine (S348). T352 is modified (phosphothreonine). K354 participates in a covalent cross-link: Glycyl lysine isopeptide (Lys-Gly) (interchain with G-Cter in ubiquitin). T364 and T367 each carry phosphothreonine. Residues 373-376 carry the AIM motif; that stretch reads WQPL. Residue K396 forms a Glycyl lysine isopeptide (Lys-Gly) (interchain with G-Cter in ubiquitin) linkage. Acidic residues predominate over residues 399–411; that stretch reads DEDEFLINSDDEM. At S407 the chain carries Phosphoserine.

As to quaternary structure, interacts with ATG8 (via AIM motif), CLB2, and ubiquitin (via CUE domain).

It localises to the cytoplasm. In terms of biological role, connects the ubiquitin pathway to autophagy by functioning as a ubiquitin-ATG8 adapter and thus mediating autophagic clearance of ubiquitin conjugates under starvation conditions. The CUE5-dependent selective autophagy pathway plays an important role in clearance of cytotoxic protein aggregates. Not required for cytoplasmic to vacuole pathway (cvt), mitophagy, pexophagy, or ribophagy. This chain is Ubiquitin-binding protein CUE5, found in Saccharomyces cerevisiae (strain ATCC 204508 / S288c) (Baker's yeast).